The sequence spans 542 residues: Chaperonin GroEL (542 aa).

Residues 30 to 33 (TLGP), K51, 87 to 91 (DGTTT), G415, 480 to 482 (NAA), and D496 each bind ATP.

The protein belongs to the chaperonin (HSP60) family. In terms of assembly, forms a cylinder of 14 subunits composed of two heptameric rings stacked back-to-back. Interacts with the co-chaperonin GroES.

Its subcellular location is the cytoplasm. It carries out the reaction ATP + H2O + a folded polypeptide = ADP + phosphate + an unfolded polypeptide.. Functionally, together with its co-chaperonin GroES, plays an essential role in assisting protein folding. The GroEL-GroES system forms a nano-cage that allows encapsulation of the non-native substrate proteins and provides a physical environment optimized to promote and accelerate protein folding. The sequence is that of Chaperonin GroEL from Tremblaya princeps.